Here is a 60-residue protein sequence, read N- to C-terminus: MEKKFLDILVCPVTKGRLEYHQDKQELWSRQAKLAYPIKDGIPYMLENEARALSEEELKA.

It belongs to the UPF0434 family.

In Neisseria meningitidis serogroup A / serotype 4A (strain DSM 15465 / Z2491), this protein is UPF0434 protein NMA0874.